A 207-amino-acid polypeptide reads, in one-letter code: 8-oxoguanine DNA glycosylase/AP lyase (207 aa).

Catalysis depends on residues Lys128 and Asp146.

Belongs to the type-2 OGG1 family.

It catalyses the reaction 2'-deoxyribonucleotide-(2'-deoxyribose 5'-phosphate)-2'-deoxyribonucleotide-DNA = a 3'-end 2'-deoxyribonucleotide-(2,3-dehydro-2,3-deoxyribose 5'-phosphate)-DNA + a 5'-end 5'-phospho-2'-deoxyribonucleoside-DNA + H(+). Its function is as follows. Catalyzes the excision of an oxidatively damaged form of guanine (7,8-dihydro-8-oxoguanine = 8-oxoG) from DNA. Also cleaves the DNA backbone at apurinic/apyrimidinic sites (AP sites). This is 8-oxoguanine DNA glycosylase/AP lyase from Saccharolobus islandicus (strain L.S.2.15 / Lassen #1) (Sulfolobus islandicus).